Reading from the N-terminus, the 339-residue chain is Uricase (339 aa).

Catalysis depends on charge relay system residues Lys33 and Thr78. Positions 78, 79, 201, 218, 266, 267, and 293 each coordinate urate. Catalysis depends on His295, which acts as the Charge relay system. The Microbody targeting signal motif lies at 337–339 (SHL).

This sequence belongs to the uricase family.

The protein localises to the peroxisome. It carries out the reaction urate + O2 + H2O = 5-hydroxyisourate + H2O2. It participates in purine metabolism; urate degradation; (S)-allantoin from urate: step 1/3. Catalyzes the oxidation of uric acid to 5-hydroxyisourate, which is further processed to form (S)-allantoin. This is Uricase (Uro) from Drosophila subobscura (Fruit fly).